The primary structure comprises 573 residues: Ascochitine biosynthesis cluster transcriptional regulator (573 aa).

It is found in the nucleus. Transcription factor that regulates the expression of the gene cluster that mediates the biosynthesis of the mycotoxin ascochitine, an o-quinone methide that plays a possible protective role against other microbial competitors in nature and is considered to be important for pathogenicity of legume-associated Didymella species. This Didymella fabae (Leaf and pod spot disease fungus) protein is Ascochitine biosynthesis cluster transcriptional regulator.